Reading from the N-terminus, the 387-residue chain is Phosphoglycerate kinase (387 aa).

Residues 21 to 23, Arg-36, 59 to 62, Arg-113, and Arg-146 each bind substrate; these read DLN and HLGR. ATP-binding positions include Lys-197, Glu-314, and 340–343; that span reads GGDT.

The protein belongs to the phosphoglycerate kinase family. As to quaternary structure, monomer.

It is found in the cytoplasm. The enzyme catalyses (2R)-3-phosphoglycerate + ATP = (2R)-3-phospho-glyceroyl phosphate + ADP. The protein operates within carbohydrate degradation; glycolysis; pyruvate from D-glyceraldehyde 3-phosphate: step 2/5. The chain is Phosphoglycerate kinase from Pseudomonas savastanoi pv. phaseolicola (strain 1448A / Race 6) (Pseudomonas syringae pv. phaseolicola (strain 1448A / Race 6)).